We begin with the raw amino-acid sequence, 415 residues long: Serine hydroxymethyltransferase (415 aa).

(6S)-5,6,7,8-tetrahydrofolate contacts are provided by residues L121 and 125–127 (GHL). The residue at position 230 (K230) is an N6-(pyridoxal phosphate)lysine. (6S)-5,6,7,8-tetrahydrofolate contacts are provided by residues E246 and 354-356 (SPF).

The protein belongs to the SHMT family. Homodimer. Requires pyridoxal 5'-phosphate as cofactor.

The protein localises to the cytoplasm. It carries out the reaction (6R)-5,10-methylene-5,6,7,8-tetrahydrofolate + glycine + H2O = (6S)-5,6,7,8-tetrahydrofolate + L-serine. The protein operates within one-carbon metabolism; tetrahydrofolate interconversion. It participates in amino-acid biosynthesis; glycine biosynthesis; glycine from L-serine: step 1/1. In terms of biological role, catalyzes the reversible interconversion of serine and glycine with tetrahydrofolate (THF) serving as the one-carbon carrier. This reaction serves as the major source of one-carbon groups required for the biosynthesis of purines, thymidylate, methionine, and other important biomolecules. Also exhibits THF-independent aldolase activity toward beta-hydroxyamino acids, producing glycine and aldehydes, via a retro-aldol mechanism. The sequence is that of Serine hydroxymethyltransferase from Bdellovibrio bacteriovorus (strain ATCC 15356 / DSM 50701 / NCIMB 9529 / HD100).